The primary structure comprises 173 residues: Ribosome maturation factor RimP (173 aa).

It belongs to the RimP family.

It localises to the cytoplasm. Required for maturation of 30S ribosomal subunits. The polypeptide is Ribosome maturation factor RimP (Chlorobium phaeobacteroides (strain DSM 266 / SMG 266 / 2430)).